The chain runs to 291 residues: Undecaprenyl-diphosphatase 2 (291 aa).

The next 6 helical transmembrane spans lie at 39-59, 85-105, 118-138, 198-218, 231-251, and 262-282; these read PGAA…LIYF, ARMG…GLTL, ITAT…RMAA, AARY…VFEL, PTLF…AWFM, and FVWY…VGVL.

This sequence belongs to the UppP family.

It localises to the cell membrane. The catalysed reaction is di-trans,octa-cis-undecaprenyl diphosphate + H2O = di-trans,octa-cis-undecaprenyl phosphate + phosphate + H(+). Functionally, catalyzes the dephosphorylation of undecaprenyl diphosphate (UPP). Confers resistance to bacitracin. This Streptomyces coelicolor (strain ATCC BAA-471 / A3(2) / M145) protein is Undecaprenyl-diphosphatase 2.